The following is a 314-amino-acid chain: Protein translocase subunit SecF (314 aa).

6 helical membrane-spanning segments follow: residues 17-37 (AVAVSAILVAIALISMGTRGL), 137-157 (QGTYAILYALLAIVAYIWWRY), 158-178 (ELNFGVAAVIALVHDVVITLG), 188-210 (SLPVLAAILTVIGYSLNDTIVVF), 250-270 (TLIVVAVLYFFGGEVINGFAF), and 272-292 (LLVGIIVGTYSSIFVASLLLV).

Belongs to the SecD/SecF family. SecF subfamily. As to quaternary structure, forms a complex with SecD. Part of the essential Sec protein translocation apparatus which comprises SecA, SecYEG and auxiliary proteins SecDF. Other proteins may also be involved.

The protein localises to the cell inner membrane. Functionally, part of the Sec protein translocase complex. Interacts with the SecYEG preprotein conducting channel. SecDF uses the proton motive force (PMF) to complete protein translocation after the ATP-dependent function of SecA. The polypeptide is Protein translocase subunit SecF (Desulfurispirillum indicum (strain ATCC BAA-1389 / DSM 22839 / S5)).